The following is a 740-amino-acid chain: Ion-translocating oxidoreductase complex subunit C (740 aa).

4Fe-4S ferredoxin-type domains are found at residues 369–397 (GEPQEEQSCIRCSACADACPADLLPQQLY) and 407–436 (KATTHNIADCIECGACAWVCPSNIPLVQYF). [4Fe-4S] cluster is bound by residues cysteine 377, cysteine 380, cysteine 383, cysteine 387, cysteine 416, cysteine 419, cysteine 422, and cysteine 426. Positions 602-718 (KLEQQQANAE…EEQVDPRKAA (117 aa)) are disordered.

This sequence belongs to the 4Fe4S bacterial-type ferredoxin family. RnfC subfamily. As to quaternary structure, the complex is composed of six subunits: RsxA, RsxB, RsxC, RsxD, RsxE and RsxG. Requires [4Fe-4S] cluster as cofactor.

It is found in the cell inner membrane. Functionally, part of a membrane-bound complex that couples electron transfer with translocation of ions across the membrane. Required to maintain the reduced state of SoxR. The chain is Ion-translocating oxidoreductase complex subunit C from Shigella sonnei (strain Ss046).